The chain runs to 400 residues: Nicotinate phosphoribosyltransferase (400 aa).

The residue at position 220 (histidine 220) is a Phosphohistidine; by autocatalysis.

This sequence belongs to the NAPRTase family. Transiently phosphorylated on a His residue during the reaction cycle. Phosphorylation strongly increases the affinity for substrates and increases the rate of nicotinate D-ribonucleotide production. Dephosphorylation regenerates the low-affinity form of the enzyme, leading to product release.

The catalysed reaction is nicotinate + 5-phospho-alpha-D-ribose 1-diphosphate + ATP + H2O = nicotinate beta-D-ribonucleotide + ADP + phosphate + diphosphate. It functions in the pathway cofactor biosynthesis; NAD(+) biosynthesis; nicotinate D-ribonucleotide from nicotinate: step 1/1. Catalyzes the synthesis of beta-nicotinate D-ribonucleotide from nicotinate and 5-phospho-D-ribose 1-phosphate at the expense of ATP. This is Nicotinate phosphoribosyltransferase from Salmonella heidelberg (strain SL476).